The following is a 178-amino-acid chain: MGRFSFNRYGYNTMQMESVESEKTRFEVECEFVQALANPNYLNFLAQRGYFKEEYFVNYLKYLLYWKDPQYARCLKFPQCLHMLEALQSQQFRDSMAYGPSAKFVEDQVVLQWQFYLRKRHRLCMMPDEGQELEESEDEADIRQKDTEDEDDEETMKKPDADTAEKNSTTSTVSKKEK.

Residues 129–140 (EGQELEESEDEA) are compositionally biased toward acidic residues. Residues 129–178 (EGQELEESEDEADIRQKDTEDEDDEETMKKPDADTAEKNSTTSTVSKKEK) are disordered. The span at 155–165 (TMKKPDADTAE) shows a compositional bias: basic and acidic residues. Residues 166 to 178 (KNSTTSTVSKKEK) show a composition bias toward polar residues.

It belongs to the Mediator complex subunit 31 family. Component of the Mediator complex.

The protein resides in the nucleus. In terms of biological role, component of the Mediator complex, a coactivator involved in the regulated transcription of nearly all RNA polymerase II-dependent genes. Mediator functions as a bridge to convey information from gene-specific regulatory proteins to the basal RNA polymerase II transcription machinery. Mediator is recruited to promoters by direct interactions with regulatory proteins and serves as a scaffold for the assembly of a functional preinitiation complex with RNA polymerase II and the general transcription factors. The chain is Mediator of RNA polymerase II transcription subunit 31 from Caenorhabditis elegans.